The sequence spans 504 residues: Signal recognition particle receptor FtsY (504 aa).

Disordered stretches follow at residues 1-71 (MFNW…DDYL) and 116-135 (ESDQ…TEIT). Residues 308–315 (GVNGAGKT), 391–395 (DTAGR), and 455–458 (TKLD) contribute to the GTP site.

It belongs to the GTP-binding SRP family. FtsY subfamily. Part of the signal recognition particle protein translocation system, which is composed of SRP and FtsY.

Its subcellular location is the cell inner membrane. It is found in the cytoplasm. The catalysed reaction is GTP + H2O = GDP + phosphate + H(+). Involved in targeting and insertion of nascent membrane proteins into the cytoplasmic membrane. Acts as a receptor for the complex formed by the signal recognition particle (SRP) and the ribosome-nascent chain (RNC). The polypeptide is Signal recognition particle receptor FtsY (Synechocystis sp. (strain ATCC 27184 / PCC 6803 / Kazusa)).